The sequence spans 468 residues: 6-phospho-beta-galactosidase (468 aa).

Positions 19, 116, 159, 160, and 297 each coordinate D-galactose 6-phosphate. The Proton donor role is filled by E160. The active-site Nucleophile is the E375. The D-galactose 6-phosphate site is built by S428, W429, K435, and Y437.

Belongs to the glycosyl hydrolase 1 family.

The catalysed reaction is a 6-phospho-beta-D-galactoside + H2O = D-galactose 6-phosphate + an alcohol. It functions in the pathway carbohydrate metabolism; lactose degradation; D-galactose 6-phosphate and beta-D-glucose from lactose 6-phosphate: step 1/1. This Streptococcus pyogenes serotype M18 (strain MGAS8232) protein is 6-phospho-beta-galactosidase.